The sequence spans 513 residues: ATP synthase subunit alpha (513 aa).

169–176 (GDRQTGKT) contributes to the ATP binding site.

It belongs to the ATPase alpha/beta chains family. F-type ATPases have 2 components, CF(1) - the catalytic core - and CF(0) - the membrane proton channel. CF(1) has five subunits: alpha(3), beta(3), gamma(1), delta(1), epsilon(1). CF(0) has three main subunits: a(1), b(2) and c(9-12). The alpha and beta chains form an alternating ring which encloses part of the gamma chain. CF(1) is attached to CF(0) by a central stalk formed by the gamma and epsilon chains, while a peripheral stalk is formed by the delta and b chains.

Its subcellular location is the cell inner membrane. It carries out the reaction ATP + H2O + 4 H(+)(in) = ADP + phosphate + 5 H(+)(out). Functionally, produces ATP from ADP in the presence of a proton gradient across the membrane. The alpha chain is a regulatory subunit. In Tolumonas auensis (strain DSM 9187 / NBRC 110442 / TA 4), this protein is ATP synthase subunit alpha.